The sequence spans 197 residues: UPF0056 inner membrane protein YhgN (197 aa).

Residues 1–3 lie on the Periplasmic side of the membrane; sequence MNE. A helical membrane pass occupies residues 4 to 24; the sequence is IISAAVLLILIMDPLGNLPIF. Residues 25–44 lie on the Cytoplasmic side of the membrane; it reads MSVLKHTEPKRRRAIMVREL. Residues 45-65 form a helical membrane-spanning segment; that stretch reads LIALLVMLVFLFAGEKILAFL. Over 66–71 the chain is Periplasmic; sequence SLRAET. A helical transmembrane segment spans residues 72–92; it reads VSISGGIILFLIAIKMIFPSA. The Cytoplasmic segment spans residues 93 to 105; the sequence is SGNSSGLPAGEEP. The helical transmembrane segment at 106–126 threads the bilayer; sequence FIVPLAIPLVAGPTILATLML. At 127 to 138 the chain is on the periplasmic side; sequence LSHQYPNQMGHL. The chain crosses the membrane as a helical span at residues 139-159; that stretch reads VIALLLAWGGTFVILLQSSLF. Residues 160-173 lie on the Cytoplasmic side of the membrane; sequence LRLLGEKGVNALER. A helical membrane pass occupies residues 174 to 194; sequence LMGLILVMMATQMFLDGIRMW. Topologically, residues 195-197 are periplasmic; it reads MKG.

Belongs to the UPF0056 (MarC) family.

It localises to the cell inner membrane. This is UPF0056 inner membrane protein YhgN (yhgN) from Escherichia coli O157:H7.